A 748-amino-acid chain; its full sequence is Polyribonucleotide nucleotidyltransferase (748 aa).

Residues aspartate 522 and aspartate 528 each coordinate Mg(2+). Residues 588–647 (PRVTTIRVPVDKIGEVIGPKGKIINAITEETGAQISIEDDGTVFVGATDGPSAQAAIDRI) enclose the KH domain. In terms of domain architecture, S1 motif spans 659–728 (GERFLGTVVK…KRGKISLVLV (70 aa)).

The protein belongs to the polyribonucleotide nucleotidyltransferase family. The cofactor is Mg(2+).

It localises to the cytoplasm. It catalyses the reaction RNA(n+1) + phosphate = RNA(n) + a ribonucleoside 5'-diphosphate. Its function is as follows. Involved in mRNA degradation. Catalyzes the phosphorolysis of single-stranded polyribonucleotides processively in the 3'- to 5'-direction. This is Polyribonucleotide nucleotidyltransferase from Mycobacterium avium (strain 104).